A 172-amino-acid polypeptide reads, in one-letter code: Large ribosomal subunit protein uL16 (172 aa).

The protein belongs to the universal ribosomal protein uL16 family.

In Methanocella arvoryzae (strain DSM 22066 / NBRC 105507 / MRE50), this protein is Large ribosomal subunit protein uL16.